A 100-amino-acid polypeptide reads, in one-letter code: Glutamyl-tRNA(Gln) amidotransferase subunit C (100 aa).

It belongs to the GatC family. Heterotrimer of A, B and C subunits.

The catalysed reaction is L-glutamyl-tRNA(Gln) + L-glutamine + ATP + H2O = L-glutaminyl-tRNA(Gln) + L-glutamate + ADP + phosphate + H(+). It catalyses the reaction L-aspartyl-tRNA(Asn) + L-glutamine + ATP + H2O = L-asparaginyl-tRNA(Asn) + L-glutamate + ADP + phosphate + 2 H(+). Functionally, allows the formation of correctly charged Asn-tRNA(Asn) or Gln-tRNA(Gln) through the transamidation of misacylated Asp-tRNA(Asn) or Glu-tRNA(Gln) in organisms which lack either or both of asparaginyl-tRNA or glutaminyl-tRNA synthetases. The reaction takes place in the presence of glutamine and ATP through an activated phospho-Asp-tRNA(Asn) or phospho-Glu-tRNA(Gln). This is Glutamyl-tRNA(Gln) amidotransferase subunit C from Streptococcus pyogenes serotype M1.